Here is a 645-residue protein sequence, read N- to C-terminus: Threonine--tRNA ligase (645 aa).

In terms of domain architecture, TGS spans 1–61 (MIKITLPDGS…TSDSTVQLLT (61 aa)). The interval 242-541 (DHRKLGKELE…LIEHVAGNFP (300 aa)) is catalytic. Zn(2+) contacts are provided by Cys-337, His-388, and His-518.

It belongs to the class-II aminoacyl-tRNA synthetase family. As to quaternary structure, homodimer. Requires Zn(2+) as cofactor.

It localises to the cytoplasm. It catalyses the reaction tRNA(Thr) + L-threonine + ATP = L-threonyl-tRNA(Thr) + AMP + diphosphate + H(+). Catalyzes the attachment of threonine to tRNA(Thr) in a two-step reaction: L-threonine is first activated by ATP to form Thr-AMP and then transferred to the acceptor end of tRNA(Thr). Also edits incorrectly charged L-seryl-tRNA(Thr). The polypeptide is Threonine--tRNA ligase (Cytophaga hutchinsonii (strain ATCC 33406 / DSM 1761 / CIP 103989 / NBRC 15051 / NCIMB 9469 / D465)).